Reading from the N-terminus, the 66-residue chain is MDLSRINTRKSKQLKSFLSSKDTFKADVHGHSALYYAIADNNMRLVCTLLNAGALKNLLENEFPLH.

The ANK repeat unit spans residues 29-58 (HGHSALYYAIADNNMRLVCTLLNAGALKNL).

The protein belongs to the orthopoxvirus OPG039 family.

This chain is Truncated interferon antagonist OPG039 (OPG040), found in Homo sapiens (Human).